The chain runs to 216 residues: Protein-L-isoaspartate O-methyltransferase (216 aa).

The active site involves Ser-61.

This sequence belongs to the methyltransferase superfamily. L-isoaspartyl/D-aspartyl protein methyltransferase family.

It is found in the cytoplasm. It catalyses the reaction [protein]-L-isoaspartate + S-adenosyl-L-methionine = [protein]-L-isoaspartate alpha-methyl ester + S-adenosyl-L-homocysteine. Functionally, catalyzes the methyl esterification of L-isoaspartyl residues in peptides and proteins that result from spontaneous decomposition of normal L-aspartyl and L-asparaginyl residues. It plays a role in the repair and/or degradation of damaged proteins. This Pyrococcus abyssi (strain GE5 / Orsay) protein is Protein-L-isoaspartate O-methyltransferase (pcm).